The primary structure comprises 160 residues: Cyclic pyranopterin monophosphate synthase (160 aa).

Substrate-binding positions include 75–77 and 113–114; these read LCH and ME. Asp128 is an active-site residue.

It belongs to the MoaC family. As to quaternary structure, homohexamer; trimer of dimers.

The enzyme catalyses (8S)-3',8-cyclo-7,8-dihydroguanosine 5'-triphosphate = cyclic pyranopterin phosphate + diphosphate. It functions in the pathway cofactor biosynthesis; molybdopterin biosynthesis. Catalyzes the conversion of (8S)-3',8-cyclo-7,8-dihydroguanosine 5'-triphosphate to cyclic pyranopterin monophosphate (cPMP). In Methylobacterium sp. (strain 4-46), this protein is Cyclic pyranopterin monophosphate synthase.